A 160-amino-acid chain; its full sequence is Putative pre-16S rRNA nuclease (160 aa).

It belongs to the YqgF nuclease family.

The protein localises to the cytoplasm. Functionally, could be a nuclease involved in processing of the 5'-end of pre-16S rRNA. This Cereibacter sphaeroides (strain KD131 / KCTC 12085) (Rhodobacter sphaeroides) protein is Putative pre-16S rRNA nuclease.